Consider the following 122-residue polypeptide: Large ribosomal subunit protein uL18 (122 aa).

It belongs to the universal ribosomal protein uL18 family. Part of the 50S ribosomal subunit; part of the 5S rRNA/L5/L18/L25 subcomplex. Contacts the 5S and 23S rRNAs.

In terms of biological role, this is one of the proteins that bind and probably mediate the attachment of the 5S RNA into the large ribosomal subunit, where it forms part of the central protuberance. This chain is Large ribosomal subunit protein uL18, found in Fervidobacterium nodosum (strain ATCC 35602 / DSM 5306 / Rt17-B1).